Here is a 71-residue protein sequence, read N- to C-terminus: Large ribosomal subunit protein uL29 (71 aa).

Residues 32–51 are disordered; sequence GVNKSTGGAPSNPGKISETK.

It belongs to the universal ribosomal protein uL29 family.

This chain is Large ribosomal subunit protein uL29, found in Methanococcus maripaludis (strain DSM 14266 / JCM 13030 / NBRC 101832 / S2 / LL).